The chain runs to 44 residues: Thioredoxin (44 aa).

Residues 2–44 (IELDKSNFEEEVLKAEGTVLVDFWSPSCEPCKALMPHVHDFEE) form the Thioredoxin domain. C29 and C32 are joined by a disulfide.

This sequence belongs to the thioredoxin family.

In terms of biological role, participates in various redox reactions through the reversible oxidation of its active center dithiol to a disulfide and catalyzes dithiol-disulfide exchange reactions. This Tissierella creatinophila protein is Thioredoxin (trxA).